The chain runs to 95 residues: Aspartyl/glutamyl-tRNA(Asn/Gln) amidotransferase subunit C (95 aa).

This sequence belongs to the GatC family. In terms of assembly, heterotrimer of A, B and C subunits.

The catalysed reaction is L-glutamyl-tRNA(Gln) + L-glutamine + ATP + H2O = L-glutaminyl-tRNA(Gln) + L-glutamate + ADP + phosphate + H(+). The enzyme catalyses L-aspartyl-tRNA(Asn) + L-glutamine + ATP + H2O = L-asparaginyl-tRNA(Asn) + L-glutamate + ADP + phosphate + 2 H(+). In terms of biological role, allows the formation of correctly charged Asn-tRNA(Asn) or Gln-tRNA(Gln) through the transamidation of misacylated Asp-tRNA(Asn) or Glu-tRNA(Gln) in organisms which lack either or both of asparaginyl-tRNA or glutaminyl-tRNA synthetases. The reaction takes place in the presence of glutamine and ATP through an activated phospho-Asp-tRNA(Asn) or phospho-Glu-tRNA(Gln). The chain is Aspartyl/glutamyl-tRNA(Asn/Gln) amidotransferase subunit C from Prosthecochloris aestuarii (strain DSM 271 / SK 413).